Here is a 275-residue protein sequence, read N- to C-terminus: Probable ribosomal RNA small subunit methyltransferase A (275 aa).

S-adenosyl-L-methionine is bound by residues Leu13, Gly38, Glu59, Asp84, and Asn101.

This sequence belongs to the class I-like SAM-binding methyltransferase superfamily. rRNA adenine N(6)-methyltransferase family. RsmA subfamily.

Its subcellular location is the cytoplasm. In terms of biological role, specifically dimethylates two adjacent adenosines in the loop of a conserved hairpin near the 3'-end of 16S rRNA in the 30S particle. May play a critical role in biogenesis of 30S subunits. The protein is Probable ribosomal RNA small subunit methyltransferase A of Methanocaldococcus jannaschii (strain ATCC 43067 / DSM 2661 / JAL-1 / JCM 10045 / NBRC 100440) (Methanococcus jannaschii).